The sequence spans 94 residues: Co-chaperonin GroES (94 aa).

This sequence belongs to the GroES chaperonin family. As to quaternary structure, heptamer of 7 subunits arranged in a ring. Interacts with the chaperonin GroEL.

The protein localises to the cytoplasm. In terms of biological role, together with the chaperonin GroEL, plays an essential role in assisting protein folding. The GroEL-GroES system forms a nano-cage that allows encapsulation of the non-native substrate proteins and provides a physical environment optimized to promote and accelerate protein folding. GroES binds to the apical surface of the GroEL ring, thereby capping the opening of the GroEL channel. In Heliobacterium modesticaldum (strain ATCC 51547 / Ice1), this protein is Co-chaperonin GroES.